Consider the following 393-residue polypeptide: S-adenosylmethionine synthase 2 (393 aa).

Residue Glu9 participates in Mg(2+) binding. His15 is a binding site for ATP. Glu43 lines the K(+) pocket. L-methionine is bound by residues Glu56 and Gln99. Residues 167-169 (DGK), 235-238 (SGRF), Asp246, 252-253 (RK), Ala269, Lys273, and Lys277 each bind ATP. Residue Asp246 coordinates L-methionine. Lys277 is an L-methionine binding site.

Belongs to the AdoMet synthase family. Homotetramer. It depends on Mn(2+) as a cofactor. Requires Mg(2+) as cofactor. The cofactor is Co(2+). K(+) is required as a cofactor. Mostly expressed in roots. Also present in stems and leaves.

It is found in the cytoplasm. It carries out the reaction L-methionine + ATP + H2O = S-adenosyl-L-methionine + phosphate + diphosphate. The protein operates within amino-acid biosynthesis; S-adenosyl-L-methionine biosynthesis; S-adenosyl-L-methionine from L-methionine: step 1/1. Catalyzes the formation of S-adenosylmethionine from methionine and ATP. The reaction comprises two steps that are both catalyzed by the same enzyme: formation of S-adenosylmethionine (AdoMet) and triphosphate, and subsequent hydrolysis of the triphosphate. The protein is S-adenosylmethionine synthase 2 (SAM2) of Solanum lycopersicum (Tomato).